Reading from the N-terminus, the 311-residue chain is Methionyl-tRNA formyltransferase (311 aa).

(6S)-5,6,7,8-tetrahydrofolate is bound at residue 110–113 (SLLP).

The protein belongs to the Fmt family.

The catalysed reaction is L-methionyl-tRNA(fMet) + (6R)-10-formyltetrahydrofolate = N-formyl-L-methionyl-tRNA(fMet) + (6S)-5,6,7,8-tetrahydrofolate + H(+). Functionally, attaches a formyl group to the free amino group of methionyl-tRNA(fMet). The formyl group appears to play a dual role in the initiator identity of N-formylmethionyl-tRNA by promoting its recognition by IF2 and preventing the misappropriation of this tRNA by the elongation apparatus. In Streptococcus pyogenes serotype M49 (strain NZ131), this protein is Methionyl-tRNA formyltransferase.